A 423-amino-acid polypeptide reads, in one-letter code: Imidazolonepropionase (423 aa).

Fe(3+) is bound by residues histidine 78 and histidine 80. Zn(2+) is bound by residues histidine 78 and histidine 80. Residues arginine 87, tyrosine 150, and histidine 183 each contribute to the 4-imidazolone-5-propanoate site. Tyrosine 150 contacts N-formimidoyl-L-glutamate. Histidine 247 contributes to the Fe(3+) binding site. Histidine 247 lines the Zn(2+) pocket. 4-imidazolone-5-propanoate is bound at residue glutamate 250. Aspartate 322 is a binding site for Fe(3+). Aspartate 322 is a binding site for Zn(2+). The N-formimidoyl-L-glutamate site is built by asparagine 324 and glycine 326. Serine 327 lines the 4-imidazolone-5-propanoate pocket.

The protein belongs to the metallo-dependent hydrolases superfamily. HutI family. Requires Zn(2+) as cofactor. The cofactor is Fe(3+).

Its subcellular location is the cytoplasm. The enzyme catalyses 4-imidazolone-5-propanoate + H2O = N-formimidoyl-L-glutamate. It participates in amino-acid degradation; L-histidine degradation into L-glutamate; N-formimidoyl-L-glutamate from L-histidine: step 3/3. Functionally, catalyzes the hydrolytic cleavage of the carbon-nitrogen bond in imidazolone-5-propanoate to yield N-formimidoyl-L-glutamate. It is the third step in the universal histidine degradation pathway. This chain is Imidazolonepropionase, found in Bacillus cytotoxicus (strain DSM 22905 / CIP 110041 / 391-98 / NVH 391-98).